The sequence spans 245 residues: MRRMLVTYMTLGYPNLESFYQFIEKSVELGTDILEIGLPPKYAKYDGPVIRKSYKAVTSWLKDYITPLKEVRKKVNIPIIILTYLEDYLSNLDNFLTTLHEIGIDGVLFPDLLIDFIDEYEEYVSKIKGKGVKAVLFTGPSLPDNLIIKASRISDIFLYYGVRPTTGIIIPVSVDSLITRVRNLVQNKLVVGFGLNDFNDLRKALSAGADGVAIGTAFIEEIEKNGIQSALHLVKTIRGILDEYS.

Active-site proton acceptor residues include glutamate 35 and aspartate 46.

The protein belongs to the TrpA family. As to quaternary structure, tetramer of two alpha and two beta chains.

It carries out the reaction (1S,2R)-1-C-(indol-3-yl)glycerol 3-phosphate + L-serine = D-glyceraldehyde 3-phosphate + L-tryptophan + H2O. It functions in the pathway amino-acid biosynthesis; L-tryptophan biosynthesis; L-tryptophan from chorismate: step 5/5. Functionally, the alpha subunit is responsible for the aldol cleavage of indoleglycerol phosphate to indole and glyceraldehyde 3-phosphate. The chain is Tryptophan synthase alpha chain from Sulfurisphaera tokodaii (strain DSM 16993 / JCM 10545 / NBRC 100140 / 7) (Sulfolobus tokodaii).